Consider the following 310-residue polypeptide: tRNA dimethylallyltransferase (310 aa).

10–17 provides a ligand contact to ATP; sequence GPTAVGKS. Residue 12–17 participates in substrate binding; it reads TAVGKS. The tract at residues 35–38 is interaction with substrate tRNA; the sequence is DSMQ.

Belongs to the IPP transferase family. As to quaternary structure, monomer. Mg(2+) is required as a cofactor.

It catalyses the reaction adenosine(37) in tRNA + dimethylallyl diphosphate = N(6)-dimethylallyladenosine(37) in tRNA + diphosphate. Functionally, catalyzes the transfer of a dimethylallyl group onto the adenine at position 37 in tRNAs that read codons beginning with uridine, leading to the formation of N6-(dimethylallyl)adenosine (i(6)A). The protein is tRNA dimethylallyltransferase of Clostridium perfringens (strain SM101 / Type A).